The chain runs to 126 residues: Small ribosomal subunit protein uS12m (126 aa).

Polar residues predominate over residues 1 to 11 (MATSNQMGANT). A disordered region spans residues 1–21 (MATSNQMGANTRSKKKKKNLK). Residues 12–21 (RSKKKKKNLK) are compositionally biased toward basic residues.

It belongs to the universal ribosomal protein uS12 family.

It localises to the mitochondrion. Functionally, protein S12 is involved in the translation initiation step. The chain is Small ribosomal subunit protein uS12m (RPS12) from Bigelowiella natans (Pedinomonas minutissima).